Here is a 298-residue protein sequence, read N- to C-terminus: Biphenyl-2,3-diol 1,2-dioxygenase (298 aa).

VOC domains lie at Ser5–Gly119 and Gly143–Ser264. Fe cation is bound by residues His146, His210, and Glu260.

This sequence belongs to the extradiol ring-cleavage dioxygenase family. Homooctamer. The enzyme is composed of two planar tetramers rotated at 45 degrees relative to each other, with a channel in the middle. Requires Fe(2+) as cofactor.

The enzyme catalyses biphenyl-2,3-diol + O2 = 2-hydroxy-6-oxo-6-phenylhexa-2,4-dienoate + H(+). It participates in xenobiotic degradation; biphenyl degradation; 2-hydroxy-2,4-pentadienoate and benzoate from biphenyl: step 3/4. Its function is as follows. Shows a preference for catechols with groups immediately adjacent to the hydroxyl substituents. In Paraburkholderia xenovorans (strain LB400), this protein is Biphenyl-2,3-diol 1,2-dioxygenase (bphC).